The following is a 332-amino-acid chain: Ribose-phosphate pyrophosphokinase (332 aa).

ATP-binding positions include 43 to 45 (DGE) and 102 to 103 (RQ). Residues His136 and Asp176 each contribute to the Mg(2+) site. Residue Lys199 is part of the active site. Residues Arg201, Asp225, and 229 to 233 (DTGGT) contribute to the D-ribose 5-phosphate site.

This sequence belongs to the ribose-phosphate pyrophosphokinase family. Class I subfamily. As to quaternary structure, homohexamer. Mg(2+) serves as cofactor.

It localises to the cytoplasm. The enzyme catalyses D-ribose 5-phosphate + ATP = 5-phospho-alpha-D-ribose 1-diphosphate + AMP + H(+). It participates in metabolic intermediate biosynthesis; 5-phospho-alpha-D-ribose 1-diphosphate biosynthesis; 5-phospho-alpha-D-ribose 1-diphosphate from D-ribose 5-phosphate (route I): step 1/1. Its function is as follows. Involved in the biosynthesis of the central metabolite phospho-alpha-D-ribosyl-1-pyrophosphate (PRPP) via the transfer of pyrophosphoryl group from ATP to 1-hydroxyl of ribose-5-phosphate (Rib-5-P). The polypeptide is Ribose-phosphate pyrophosphokinase (Mycoplasma genitalium (strain ATCC 33530 / DSM 19775 / NCTC 10195 / G37) (Mycoplasmoides genitalium)).